The following is a 225-amino-acid chain: MKLIVSVMPRSLEEAQALDATRYLDADIIEWRADYLPKEAILQVAPAIFEKFAGRELVFTLRTRSEGGEIDLSPEEYIHLIKEVAQLYQPDYIDFEYYSYKDVFEEMLDFPNLVLSYHNFQETPENMMEILSELTILNPKLVKVAVMAHTEQDVLDLMNYTRGFKTLNPEQEYVTISMGKVGKVSRITADVTGSSWSFASLDEVSAPGQISLASMKKIREILDEA.

3-dehydroquinate contacts are provided by residues Ser-6, 30-32, and Arg-62; that span reads EWR. Residue His-118 is the Proton donor/acceptor of the active site. The active-site Schiff-base intermediate with substrate is the Lys-143. 3-dehydroquinate-binding residues include Arg-186, Ser-205, and Gln-209.

The protein belongs to the type-I 3-dehydroquinase family. Homodimer.

It catalyses the reaction 3-dehydroquinate = 3-dehydroshikimate + H2O. It participates in metabolic intermediate biosynthesis; chorismate biosynthesis; chorismate from D-erythrose 4-phosphate and phosphoenolpyruvate: step 3/7. Its function is as follows. Involved in the third step of the chorismate pathway, which leads to the biosynthesis of aromatic amino acids. Catalyzes the cis-dehydration of 3-dehydroquinate (DHQ) and introduces the first double bond of the aromatic ring to yield 3-dehydroshikimate. This is 3-dehydroquinate dehydratase from Streptococcus pneumoniae (strain Taiwan19F-14).